Reading from the N-terminus, the 197-residue chain is Probable nicotinate-nucleotide adenylyltransferase (197 aa).

The protein belongs to the NadD family.

The catalysed reaction is nicotinate beta-D-ribonucleotide + ATP + H(+) = deamido-NAD(+) + diphosphate. The protein operates within cofactor biosynthesis; NAD(+) biosynthesis; deamido-NAD(+) from nicotinate D-ribonucleotide: step 1/1. Its function is as follows. Catalyzes the reversible adenylation of nicotinate mononucleotide (NaMN) to nicotinic acid adenine dinucleotide (NaAD). This is Probable nicotinate-nucleotide adenylyltransferase from Neisseria meningitidis serogroup C (strain 053442).